We begin with the raw amino-acid sequence, 288 residues long: RELT-like protein 1 (288 aa).

The first 23 residues, 1–23 (MAPPAASGIPSIAPSLGPTAVWL), serve as a signal peptide directing secretion. The Extracellular portion of the chain corresponds to 24 to 57 (GNRSDLGDVQALASRDLPTTTVTAGNNNKPEHLE). The N-linked (GlcNAc...) asparagine glycan is linked to N25. The chain crosses the membrane as a helical span at residues 58 to 78 (YVAFVLVPVFFIMGLLGILIC). Residues 79–288 (HVLKKKGYRC…EGTQERRSSE (210 aa)) lie on the Cytoplasmic side of the membrane. 2 disordered regions span residues 145 to 172 (FEPE…GAAS) and 237 to 288 (HKSN…RSSE). Positions 152–172 (SPNAPGSPTSPGSPLSPGAAS) are enriched in low complexity. Positions 237–246 (HKSNSKERKS) are enriched in basic and acidic residues.

The protein belongs to the RELT family.

It localises to the cell membrane. This Gallus gallus (Chicken) protein is RELT-like protein 1 (RELL1).